The primary structure comprises 551 residues: Glucans biosynthesis protein D (551 aa).

The segment at residues 1-32 (MDRRRFIKGSMAMAAVCGTSGIASLFSQAAFA) is a signal peptide (tat-type signal).

The protein belongs to the OpgD/OpgG family. Post-translationally, predicted to be exported by the Tat system. The position of the signal peptide cleavage has not been experimentally proven.

It localises to the periplasm. Its pathway is glycan metabolism; osmoregulated periplasmic glucan (OPG) biosynthesis. Functionally, probably involved in the control of the structural glucose backbone of osmoregulated periplasmic glucans (OPGs). The chain is Glucans biosynthesis protein D from Shigella dysenteriae serotype 1 (strain Sd197).